Here is a 673-residue protein sequence, read N- to C-terminus: Protein-arginine deiminase type-2 (673 aa).

Methionine 1 bears the N-acetylmethionine mark. 12 residues coordinate Ca(2+): aspartate 131, aspartate 133, aspartate 135, glutamate 139, asparagine 162, aspartate 164, aspartate 166, aspartate 174, aspartate 177, lysine 179, aspartate 185, and aspartate 188. Position 352 is a citrulline (arginine 352). Ca(2+) is bound by residues glutamate 362, aspartate 397, phenylalanine 416, leucine 419, and glutamate 420. Cysteine 655 (nucleophile) is an active-site residue.

This sequence belongs to the protein arginine deiminase family. Homodimer. Ca(2+) serves as cofactor. Expressed in various tissues including muscle, uterus, spinal cord, salivary gland and pancreas.

It localises to the cytoplasm. The catalysed reaction is L-arginyl-[protein] + H2O = L-citrullyl-[protein] + NH4(+). Its function is as follows. Catalyzes the deimination of arginine residues of proteins. The polypeptide is Protein-arginine deiminase type-2 (Padi2) (Mus musculus (Mouse)).